An 821-amino-acid chain; its full sequence is V-type proton ATPase subunit a3 (821 aa).

Alanine 2 is subject to N-acetylalanine. Residues 2–421 (AESGGGGGCC…ANPGVFTIVT (420 aa)) lie on the Cytoplasmic side of the membrane. Residues 97 to 144 (KENDIDLDDVEVKLGELEAELVEINANNDKLQRSYNELMEYKLVLQKA) are a coiled coil. Serine 174 bears the Phosphoserine mark. Residues 422–442 (FPFLFAVMFGDWGHGICILLA) form a helical membrane-spanning segment. Residues 443–469 (TMYLILKEKKLASQKLGDIMEMAFGGR) are Vacuolar-facing. Residues 470–490 (YVILMMSLFSIYTGLIYNEFF) form a helical membrane-spanning segment. Residues 491 to 548 (SIPFPLFAPSAYDCRDVSCSEATTIGLIKVRDTYPFGLDPVWHGSRSELPFLNSLKMK) are Cytoplasmic-facing. Residues 549–569 (MSILLGVSQMNLGIIMSYFNA) traverse the membrane as a helical segment. Over 570–581 (RFFKSSVNIWFQ) the chain is Vacuolar. Residues 582-602 (FIPQMIFLNSLFGYLSVLIII) form a helical membrane-spanning segment. Topologically, residues 603-640 (KWCTGSQADLYHVMIYMFLSPMDELGENQLFPHQKTLQ) are cytoplasmic. Residues 641–661 (LVLLFLALVSVPCMLLPKPFI) form a helical membrane-spanning segment. Residues 662–758 (LKKQHEARHQ…LLLAWGYNNP (97 aa)) lie on the Vacuolar side of the membrane. Residues 759 to 779 (LILIVGVLVFIFATVGVLLVM) traverse the membrane as a helical segment. Over 780-821 (ETLSAFLHALRLHWVEFQNKFYEGDGYKFAPFTFIFTANEDE) the chain is Cytoplasmic.

The protein belongs to the V-ATPase 116 kDa subunit family. In terms of assembly, V-ATPase is a heteromultimeric enzyme composed of a peripheral catalytic V1 complex (components A to H) attached to an integral membrane V0 proton pore complex (components: a, c, c'', d and e). As to expression, expressed in etiolated seedlings hypocotyls.

Its subcellular location is the vacuole membrane. In terms of biological role, essential component of the vacuolar proton pump (V-ATPase), a multimeric enzyme that catalyzes the translocation of protons across the membranes. Required for assembly and activity of the V-ATPase. Involved in vacuolar nutrient storage (e.g. accumulation and storage of nitrate) and in tolerance to some toxic ions (e.g. zinc ions sequestration in vacuoles). The protein is V-type proton ATPase subunit a3 (VHA-a3) of Arabidopsis thaliana (Mouse-ear cress).